The sequence spans 491 residues: Cyclin-B1-5 (491 aa).

The 73-residue stretch at 275–347 (DMYSFYKEVE…VKAVPKRELQ (73 aa)) folds into the Cyclin N-terminal domain.

Belongs to the cyclin family. Cyclin AB subfamily. As to expression, expressed in roots, stems and flowers.

In Arabidopsis thaliana (Mouse-ear cress), this protein is Cyclin-B1-5 (CYCB1-5).